We begin with the raw amino-acid sequence, 437 residues long: Enolase (437 aa).

Gln162 lines the (2R)-2-phosphoglycerate pocket. The active-site Proton donor is the Glu204. Residues Asp251, Glu297, and Asp324 each coordinate Mg(2+). (2R)-2-phosphoglycerate is bound by residues Lys349, Arg378, Ser379, and Lys400. The active-site Proton acceptor is the Lys349.

The protein belongs to the enolase family. Requires Mg(2+) as cofactor.

It is found in the cytoplasm. It localises to the secreted. The protein resides in the cell surface. It carries out the reaction (2R)-2-phosphoglycerate = phosphoenolpyruvate + H2O. The protein operates within carbohydrate degradation; glycolysis; pyruvate from D-glyceraldehyde 3-phosphate: step 4/5. Its function is as follows. Catalyzes the reversible conversion of 2-phosphoglycerate (2-PG) into phosphoenolpyruvate (PEP). It is essential for the degradation of carbohydrates via glycolysis. In Chlorobium luteolum (strain DSM 273 / BCRC 81028 / 2530) (Pelodictyon luteolum), this protein is Enolase.